Consider the following 96-residue polypeptide: UPF0235 protein ECA3630 (96 aa).

Belongs to the UPF0235 family.

The sequence is that of UPF0235 protein ECA3630 from Pectobacterium atrosepticum (strain SCRI 1043 / ATCC BAA-672) (Erwinia carotovora subsp. atroseptica).